A 100-amino-acid polypeptide reads, in one-letter code: Aspartyl/glutamyl-tRNA(Asn/Gln) amidotransferase subunit C (100 aa).

This sequence belongs to the GatC family. As to quaternary structure, heterotrimer of A, B and C subunits.

It catalyses the reaction L-glutamyl-tRNA(Gln) + L-glutamine + ATP + H2O = L-glutaminyl-tRNA(Gln) + L-glutamate + ADP + phosphate + H(+). The enzyme catalyses L-aspartyl-tRNA(Asn) + L-glutamine + ATP + H2O = L-asparaginyl-tRNA(Asn) + L-glutamate + ADP + phosphate + 2 H(+). Functionally, allows the formation of correctly charged Asn-tRNA(Asn) or Gln-tRNA(Gln) through the transamidation of misacylated Asp-tRNA(Asn) or Glu-tRNA(Gln) in organisms which lack either or both of asparaginyl-tRNA or glutaminyl-tRNA synthetases. The reaction takes place in the presence of glutamine and ATP through an activated phospho-Asp-tRNA(Asn) or phospho-Glu-tRNA(Gln). The sequence is that of Aspartyl/glutamyl-tRNA(Asn/Gln) amidotransferase subunit C from Herminiimonas arsenicoxydans.